Here is a 390-residue protein sequence, read N- to C-terminus: MVDVAESRRTQRAEGPRTIFAIATANPPNCVEQSTYPDFYFKITNSEHKVELKEKFQRMDDKSMIKRRYMYLTEEILKENPNVCEYMAPSLDARQDMFVVEVPRLGKEAAVKAIKEWGQPKSKITHLIVCTTSGVDMPGADYQLTKLLGLRPHVKRYMMYQQGCFAGGTVLRLAKDLAENNKGARVLVVCSEVTAVTFRGPSDTHLDSLVGQALFGDGAAALIVGSDPIPEIEKPLFELIWTAQTIAPDSEGAIDGHLREVGLTFHLLKDVPGIVSKNIDKALVEAFQPLGISDYNSIFWIAHPGGPAILDQVEQKLAFKPEKMRATREVLSEYGNMSSACVLFILDEMRKKSAQNGLKTTGEGLEWGVLFGFGPGLTIETVVLLRSVAI.

The active site involves C164.

Belongs to the thiolase-like superfamily. Chalcone/stilbene synthases family.

The enzyme catalyses (E)-4-coumaroyl-CoA + 3 malonyl-CoA + 3 H(+) = 2',4,4',6'-tetrahydroxychalcone + 3 CO2 + 4 CoA. Its pathway is secondary metabolite biosynthesis; flavonoid biosynthesis. Its function is as follows. The primary product of this enzyme is 4,2',4',6'-tetrahydroxychalcone (also termed naringenin-chalcone or chalcone) which can under specific conditions spontaneously isomerize into naringenin. In Onobrychis viciifolia (Common sainfoin), this protein is Chalcone synthase (CHS).